Consider the following 204-residue polypeptide: Ubiquitin-conjugating enzyme E2 T (204 aa).

The UBC core domain maps to 2–152 (QRASRLKKEL…AKQWTEAHAR (151 aa)). Catalysis depends on cysteine 86, which acts as the Glycyl thioester intermediate. Glycyl lysine isopeptide (Lys-Gly) (interchain with G-Cter in ubiquitin) cross-links involve residues lysine 91 and lysine 181. The segment at 150 to 204 (HARQKQKADEEELGTSSEVGDSEESHSTQKRKARPLGGMEKKFSPDVQRVYPGPS) is disordered. Glycyl lysine isopeptide (Lys-Gly) (interchain with G-Cter in SUMO2) cross-links involve residues lysine 190 and lysine 191. Serine 193 is modified (phosphoserine).

This sequence belongs to the ubiquitin-conjugating enzyme family. Interacts with FANCL and BRCA1. Post-translationally, auto-ubiquitinated. Effects of auto-monoubiquitination at Lys-91 and Lys-181 are unclear.

Its subcellular location is the nucleus. The catalysed reaction is S-ubiquitinyl-[E1 ubiquitin-activating enzyme]-L-cysteine + [E2 ubiquitin-conjugating enzyme]-L-cysteine = [E1 ubiquitin-activating enzyme]-L-cysteine + S-ubiquitinyl-[E2 ubiquitin-conjugating enzyme]-L-cysteine.. The protein operates within protein modification; protein ubiquitination. In terms of biological role, accepts ubiquitin from the E1 complex and catalyzes its covalent attachment to other proteins. Catalyzes monoubiquitination. Involved in mitomycin-C (MMC)-induced DNA repair: acts as a specific E2 ubiquitin-conjugating enzyme for the Fanconi anemia complex by associating with E3 ubiquitin-protein ligase FANCL and catalyzing monoubiquitination of FANCD2, a key step in the DNA damage pathway. Also mediates monoubiquitination of FANCL and FANCI. May contribute to ubiquitination and degradation of BRCA1. In vitro able to promote polyubiquitination using all 7 ubiquitin Lys residues, but may prefer 'Lys-11'-, 'Lys-27'-, 'Lys-48'- and 'Lys-63'-linked polyubiquitination. In Mus musculus (Mouse), this protein is Ubiquitin-conjugating enzyme E2 T (Ube2t).